The chain runs to 1964 residues: Probable helicase with zinc finger domain (1964 aa).

A C3H1-type zinc finger spans residues 178–206 (SEEYTLCKRFLEQGICRYGAQCTSAHSQE). Ser-248 bears the Phosphoserine mark. 668 to 675 (GPYGTGKT) serves as a coordination point for ATP. A DEAA box motif is present at residues 794 to 797 (DEAA). Residues 1116–1127 (HSGNSSRQQQSP) are compositionally biased toward polar residues. A disordered region spans residues 1116–1135 (HSGNSSRQQQSPPKVKSLYH). The residue at position 1163 (Thr-1163) is a Phosphothreonine. At Arg-1245 the chain carries Omega-N-methylarginine. Disordered stretches follow at residues 1248-1350 (PIPY…LPAP), 1360-1379 (HFHP…QPHT), 1388-1449 (LPEQ…QAGP), 1463-1491 (QSPA…RAIT), 1631-1655 (QVQP…QFAN), and 1743-1964 (QHAA…SYFK). Basic and acidic residues-rich tracts occupy residues 1268–1281 (HAEK…RNGK) and 1292–1308 (NKIR…KQVD). The segment covering 1365–1374 (PQLPRPPFPA) has biased composition (pro residues). Low complexity predominate over residues 1388–1431 (LPEQPNQMAPQPNQVAPQPNQMTPQPNQVAPQPNQVVQQQSQAP). Over residues 1635–1644 (RSPPAVPSPP) the composition is skewed to pro residues. Phosphoserine occurs at positions 1636, 1760, 1763, and 1788. The span at 1755-1765 (SSRTVSASSLP) shows a compositional bias: polar residues. Polar residues-rich tracts occupy residues 1799-1813 (PQDS…QGHS) and 1826-1849 (WANT…TSQP). Residues 1860 to 1870 (KPPEDQLKPES) are compositionally biased toward basic and acidic residues. Composition is skewed to polar residues over residues 1872–1881 (EVSSSFNYSM) and 1897–1910 (IAES…QSPA). Positions 1941–1956 (PLSLLQELSLGSSPGS) are enriched in low complexity.

It belongs to the DNA2/NAM7 helicase family. In terms of assembly, interacts with POLR2A. Interacts with SMYD3; the interaction may bridge SMYD3 and RNA polymerase II. Interacts with SMYD2.

Its subcellular location is the nucleus. In terms of biological role, may act as a helicase that plays a role in RNA metabolism in multiple tissues and organs within the developing embryo. This is Probable helicase with zinc finger domain (Helz) from Mus musculus (Mouse).